We begin with the raw amino-acid sequence, 627 residues long: MAFNFNWSPLMADAGFYTRAQELLTAALNKSPKPPIIVDDIVVTELNLGSNPPELEILEIGDLAEDRFRGIFKMSYAGDAFLTLKTCVQANPLNTYLLTRHPFTSPQPLAAATGLTIPLQITLSDIKLSGFVILVFSKQKGITVVFRNDPLESLKVSSTFDSIPFVRDYLQKEIEGQLRILFMDELPAIIHRLSLRLWGTEYSELETTSAQVTNPSLDGPGLDPLLNPPQDPVDASGNVLSISEIASLSLDSGVEMHSLFSRKNVLRLAALTDSQRTLSLFTPSIREVVFRAWTGSMEQADGPSGLVSPMSPPLSRTHSHIATSSLSLQDAASLASSSHSRPTPPSSGFSGYGLSMGAGRHSKAHARKRKKRVVDLRRRPKSADDMESVSGESAYTETSTTTSAVSVFSGSTIPEENNDDPVTPPVSPQRTIRRPTLRDRIAARDDAERNSRRGIPAEFGHDLPTVRTSPPIANDMARIITSASNLQRQLQQQQPADSKPLPSLQETAPIRTLRPSPSSTPQYPTEKPNASNNYTSSSSPSARDPQQQQPQQLSRPSSSFIMESAQNGGILEQAWMMKMASEIARRIQDEKMGGEDPTNSSSRGGSGGGFWERPSMRSHTPPPAYRH.

The 195-residue stretch at M1–L195 folds into the SMP-LTD domain. Disordered stretches follow at residues S209–Q230, A332–P470, L486–S557, and R586–H627. Composition is skewed to low complexity over residues P215 to L225 and A332 to R341. A compositionally biased stretch (basic residues) spans R360–R372. Residues V373–D384 are compositionally biased toward basic and acidic residues. A compositionally biased stretch (low complexity) spans S390–T412. The span at T436–S451 shows a compositional bias: basic and acidic residues. The span at P528–S557 shows a compositional bias: low complexity.

It belongs to the MDM34 family. As to quaternary structure, component of the ER-mitochondria encounter structure (ERMES) or MDM complex, composed of MMM1, MDM10, MDM12 and MDM34.

The protein resides in the mitochondrion outer membrane. Its function is as follows. Component of the ERMES/MDM complex, which serves as a molecular tether to connect the endoplasmic reticulum (ER) and mitochondria. Components of this complex are involved in the control of mitochondrial shape and protein biogenesis, and function in nonvesicular lipid trafficking between the ER and mitochondria. MDM34 is required for the interaction of the ER-resident membrane protein MMM1 and the outer mitochondrial membrane-resident beta-barrel protein MDM10. The sequence is that of Mitochondrial distribution and morphology protein 34 from Blastomyces gilchristii (strain SLH14081) (Blastomyces dermatitidis).